The primary structure comprises 107 residues: Parvalbumin beta 2 (107 aa).

The residue at position 1 (serine 1) is an N-acetylserine. 2 consecutive EF-hand domains span residues 37 to 72 (XSPDDLKKXXXXLDQDKSGFLEEDELKLFLQNFSAS) and 89 to 107 (DADGDGMLGLDEFAVLVKQ). The Ca(2+) site is built by aspartate 50, aspartate 52, serine 54, phenylalanine 56, glutamate 58, glutamate 61, aspartate 89, aspartate 91, aspartate 93, methionine 95, and glutamate 100.

It belongs to the parvalbumin family.

Functionally, in muscle, parvalbumin is thought to be involved in relaxation after contraction. It binds two calcium ions. The polypeptide is Parvalbumin beta 2 (Oncorhynchus mykiss (Rainbow trout)).